Reading from the N-terminus, the 314-residue chain is Olfactory receptor 14K1 (314 aa).

At 1–23 (MTNQTQMMEFLLVRFTENWVLLR) the chain is on the extracellular side. The N-linked (GlcNAc...) asparagine glycan is linked to Asn-3. A helical membrane pass occupies residues 24–44 (LHALLFSLIYLTAVLMNLVII). The Cytoplasmic portion of the chain corresponds to 45-52 (LLMILDHR). Residues 53-73 (LHMAMYFFLRHLSFLDLCLIS) traverse the membrane as a helical segment. Topologically, residues 74–97 (ATVPKSILNSVASTDSISFLGCVL) are extracellular. Cys-95 and Cys-187 are joined by a disulfide. A helical membrane pass occupies residues 98–118 (QLFLVVLLAGSEIGILTAMSY). Topologically, residues 119–131 (DRYAAICCPLHCE) are cytoplasmic. The helical transmembrane segment at 132 to 152 (AVMSRGLCVQLMALSWLNRGA) threads the bilayer. At 153–194 (LGLLYTAGTFSLNFYGSDELHQFFCDVPALLKLTCSKEHAII) the chain is on the extracellular side. A helical membrane pass occupies residues 195 to 215 (SVSVAIGVCYAFSCLVCIVVS). At 216-235 (YVYIFSAVLRISQRQRQSKA) the chain is on the cytoplasmic side. The helical transmembrane segment at 236–256 (FSNCVPHLIVVTVFLVTGAVA) threads the bilayer. Over 257–269 (YLKPGSDAPSILD) the chain is Extracellular. A helical transmembrane segment spans residues 270 to 290 (LLVSVFYSVAPPTLNPVIYCL). The Cytoplasmic portion of the chain corresponds to 291–314 (KNKDIKSALSKVLWNVRSSGVMKR).

Belongs to the G-protein coupled receptor 1 family.

Its subcellular location is the cell membrane. In terms of biological role, odorant receptor. The polypeptide is Olfactory receptor 14K1 (OR14K1) (Homo sapiens (Human)).